The sequence spans 266 residues: Putative carbamate hydrolase RutD (266 aa).

The AB hydrolase-1 domain occupies 15-239; sequence PVVVLSAGLG…RVEMPWGGHA (225 aa).

It belongs to the AB hydrolase superfamily. Hydrolase RutD family.

The catalysed reaction is carbamate + 2 H(+) = NH4(+) + CO2. Involved in pyrimidine catabolism. May facilitate the hydrolysis of carbamate, a reaction that can also occur spontaneously. This chain is Putative carbamate hydrolase RutD, found in Klebsiella variicola (strain At-22).